The chain runs to 392 residues: Protein SRL2 (392 aa).

Ser-11 carries the post-translational modification Phosphoserine. Positions 18–52 are disordered; it reads KPSETPKMEEEKLEVTNVNASSSKKVHKSKKSTSK. Basic and acidic residues predominate over residues 21-31; that stretch reads ETPKMEEEKLE. Positions 41 to 50 are enriched in basic residues; the sequence is KKVHKSKKST. A Phosphoserine modification is found at Ser-139. The disordered stretch occupies residues 284 to 303; that stretch reads EDSTAVTNENGHISSEKNLK. The segment covering 287–296 has biased composition (polar residues); it reads TAVTNENGHI.

It is found in the cytoplasm. The protein localises to the nucleus. This chain is Protein SRL2 (SRL2), found in Saccharomyces cerevisiae (strain ATCC 204508 / S288c) (Baker's yeast).